We begin with the raw amino-acid sequence, 379 residues long: MSEQFRLTRRSMLAGAAVAGALAPVVTSVAHAEGGGIKTNSAATAANIATLERVKVELVKPPFVHAHTQKAEGEPKVVEFKMTIQEKKIVVDDKGTEVHAMTFDGSVPGPMMIVHQDDYVELTLVNPDTNELQHNIDFHSATGALGGGALTVVNPGDTAVLRFKATKAGVFVYHCAPAGMVPWHVTSGMNGAIMVLPRDGLKDHKGHELVYDKVYYVGEQDFYVPKDENGKFKKYESAGEAYPDVLEAMKTLTPTHVVFNGAVGALTGDNALQAKVGDRVLILHSQANRDTRPHLIGGHGDYVWATGKFANPPELDQETWFIPGGAAGAAYYTFQQPGIYAYVNHNLIEAFELGAAGHFKVTGDWNDDLMTAVVSPTSG.

Positions 1–32 form a signal peptide, tat-type signal; that stretch reads MSEQFRLTRRSMLAGAAVAGALAPVVTSVAHA. Plastocyanin-like domains lie at 33–214 and 215–379; these read EGGG…YDKV and YYVG…PTSG. The Cu cation site is built by His134, His139, His174, Cys175, His184, Met189, and His345.

Belongs to the multicopper oxidase family. As to quaternary structure, homotrimer. It depends on Cu(2+) as a cofactor. Cu(+) is required as a cofactor. Requires FAD as cofactor. Predicted to be exported by the Tat system. The position of the signal peptide cleavage has not been experimentally proven.

It localises to the periplasm. It catalyses the reaction nitric oxide + Fe(III)-[cytochrome c] + H2O = Fe(II)-[cytochrome c] + nitrite + 2 H(+). It functions in the pathway nitrogen metabolism; nitrate reduction (denitrification); dinitrogen from nitrate: step 2/4. This is Copper-containing nitrite reductase (nirU) from Neorhizobium galegae (Rhizobium galegae).